Reading from the N-terminus, the 1169-residue chain is Chromosome partition protein Smc (1169 aa).

Pro32–Asn39 provides a ligand contact to ATP. Coiled coils occupy residues Ile170–Glu507 and Arg659–Leu1030.

Belongs to the SMC family. As to quaternary structure, homodimer.

Its subcellular location is the cytoplasm. In terms of biological role, required for chromosome condensation and partitioning. This Coxiella burnetii (strain RSA 493 / Nine Mile phase I) protein is Chromosome partition protein Smc.